Here is a 445-residue protein sequence, read N- to C-terminus: Trigger factor (445 aa).

Positions 162–247 (GDQVTIDAIG…IKAVHTAEPT (86 aa)) constitute a PPIase FKBP-type domain.

It belongs to the FKBP-type PPIase family. Tig subfamily.

It is found in the cytoplasm. It carries out the reaction [protein]-peptidylproline (omega=180) = [protein]-peptidylproline (omega=0). Involved in protein export. Acts as a chaperone by maintaining the newly synthesized protein in an open conformation. Functions as a peptidyl-prolyl cis-trans isomerase. This chain is Trigger factor, found in Rickettsia conorii (strain ATCC VR-613 / Malish 7).